Reading from the N-terminus, the 1651-residue chain is MEGSLAGSLAAPDRPQGPERLPGPAPRENIEGGAEAAEGEGGIFRSTRYLPVTKEGPRDILDGRGGISGTPDGRGPWEHPLVQEAGEGILSERRFEDSVIVRTMKPHAELEGSRRFLHHRGEPRLLEKHAQGRPRFDWLQDEDEQGSPQDAGLHLDLPAQPPPLAPFRRVFVPVEDTPKTLDMAVVGGREDLEDLEGLAQPSEWGLPTSASEVATQTWTVNSEASVERLQPLLPPIRTGPYLCELLEEVAEGVASPDEDEDEEPAVFPCIECSIYFKQKEHLLEHMSQHRRAPGQEPPADLAPLACGECGWAFADPTALEQHRQLHQASREKIIEEIQKLKQVPGDEGREARLQCPKCVFGTNSSRAYVQHAKLHMREPPGQTTKEPFGGSSGAGSPSPEASALLYQPYGAAVGLSACVFCGFPAPSESLLREHVRLVHAHPHWEEDGEAYEEDPASQPGTSQDAHACFPDTAVDYFGKAEPSLAPMWRENPAGYDPSLAFGPGCQQLSIRDFPLSKPLLHGTGQRPLGRLAFPSTLASTPYSLQLGRNKSTVHPQGLGERRRPWSEEEEEEEEEEDVVLTSEMDFSPENGVFSPLATPSLIPQAALELKQAFREALQAVEATQGQQQQLRGMVPIVLVAKLGPQVMAAARVPPRLQPEELGLAGAHPLDFLLLDAPLGGPLGLDTLLDGDPAMALKHEERKCPYCPDRFHNGIGLANHVRGHLNRVGVSYNVRHFISAEEVKAIERRFSFQKKKKKVANFDPGTFSLMRCDFCGAGFDTRAGLSSHARAHLRDFGITNWELTVSPINILQELLATSAAEQPPSPLGREPGGPPGSFLTSRRPRLPLTVPFPPTWAEDPGPAYGDAQSLTTCEVCGACFETRKGLSSHARSHLRQLGVAESESSGAPIDLLYELVKQKGLPDAHLGLPPGLAKKSSSLKEVVAGAPRPGLLSLAKPLDAPAVNKAIKSPPGFSAKGLGHPPSSPLLKKTPLALAGSPTPKNPEDKSPQLSLSPRPASPKAQWPQSEDEGPLNLTSGPEPARDIRCEFCGEFFENRKGLSSHARSHLRQMGVTEWYVNGSPIDTLREILKRRTQSRPGGPPNPPGPSPKALAKMMGGAGPGSSLEARSPSDLHISPLAKKLPPPPGSPLGHSPTASPPPTARKMFPGLAAPSLPKKLKPEQIRVEIKREMLPGALHGELHPSEGPWGAPREDMTPLNLSSRAEPVRDIRCEFCGEFFENRKGLSSHARSHLRQMGVTEWSVNGSPIDTLREILKKKSKPCLIKKEPPAGDLAPALAEDGPPTVAPGPVQSPLPLSPLAGRPGKPGAGPAQVPRELSLTPITGAKPSATGYLGSVAAKRPLQEDRLLPAEVKAKTYIQTELPFKAKTLHEKTSHSSTEACCELCGLYFENRKALASHARAHLRQFGVTEWCVNGSPIETLSEWIKHRPQKVGAYRSYIQGGRPFTKKFRSAGHGRDSDKRPSLGLAPGGLAVVGRSAGGEPGPEAGRAADGGERPLAASPPGTVKAEEHQRQNINKFERRQARPPDASAARGGEDTNDLQQKLEEVRQPPPRVRPVPSLVPRPPQTSLVKFVGNIYTLKCRFCEVEFQGPLSIQEEWVRHLQRHILEMNFSKADPPPEESQAPQAQTAAAEAP.

The tract at residues 1–79 (MEGSLAGSLA…TPDGRGPWEH (79 aa)) is disordered. Residues Ala-11, Arg-14, Asn-29, Gly-32, Gly-39, Gly-42, and Glu-258 each participate in a glycyl lysine isopeptide (Lys-Gly) (interchain with G-Cter in SUMO2) cross-link. 3 consecutive C2H2-type zinc fingers follow at residues 267-289 (FPCI…MSQH), 304-326 (LACG…RQLH), and 353-375 (LQCP…AKLH). A Glycyl lysine isopeptide (Lys-Gly) (interchain with G-Cter in SUMO2) cross-link involves residue Phe-313. The tract at residues 376–399 (MREPPGQTTKEPFGGSSGAGSPSP) is disordered. Residues 386–399 (EPFGGSSGAGSPSP) are compositionally biased toward low complexity. Residues 416-439 (SACVFCGFPAPSESLLREHVRLVH) form a C2H2-type 4 zinc finger. The segment at 546-578 (LGRNKSTVHPQGLGERRRPWSEEEEEEEEEEDV) is disordered. Over residues 567 to 578 (EEEEEEEEEEDV) the composition is skewed to acidic residues. C2H2-type zinc fingers lie at residues 701 to 723 (RKCP…VRGH) and 769 to 791 (MRCD…ARAH). Residues 819–843 (AEQPPSPLGREPGGPPGSFLTSRRP) are disordered. A C2H2-type 7 zinc finger spans residues 870–892 (TTCEVCGACFETRKGLSSHARSH). Residues Lys-883, Lys-939, Lys-955, Lys-967, and Lys-988 each participate in a glycyl lysine isopeptide (Lys-Gly) (interchain with G-Cter in SUMO2) cross-link. A disordered region spans residues 972–1038 (FSAKGLGHPP…GPLNLTSGPE (67 aa)). The span at 984–994 (PLLKKTPLALA) shows a compositional bias: low complexity. Ser-996 is modified (phosphoserine). Phosphothreonine is present on Thr-998. Residues Lys-1000 and Lys-1005 each participate in a glycyl lysine isopeptide (Lys-Gly) (interchain with G-Cter in SUMO2) cross-link. Ser-1006, Ser-1012, Ser-1017, and Ser-1025 each carry phosphoserine. Positions 1030-1034 (PLNLT) are interaction with CTBP1 and CTBP2 1. Residues 1043–1065 (IRCEFCGEFFENRKGLSSHARSH) form a C2H2-type 8 zinc finger. Residue Lys-1056 forms a Glycyl lysine isopeptide (Lys-Gly) (interchain with G-Cter in SUMO2) linkage. Phosphoserine is present on residues Ser-1079 and Ser-1106. The tract at residues 1091 to 1174 (RTQSRPGGPP…PGLAAPSLPK (84 aa)) is disordered. The segment covering 1097–1106 (GGPPNPPGPS) has biased composition (pro residues). Glycyl lysine isopeptide (Lys-Gly) (interchain with G-Cter in SUMO2) cross-links involve residues Lys-1108 and Lys-1112. 3 positions are modified to phosphoserine: Ser-1122, Ser-1127, and Ser-1134. Residues Lys-1138 and Lys-1139 each participate in a glycyl lysine isopeptide (Lys-Gly) (interchain with G-Cter in SUMO2) cross-link. A phosphoserine mark is found at Ser-1146 and Ser-1151. N6,N6,N6-trimethyllysine; by EHMT2; alternate is present on Lys-1162. At Lys-1162 the chain carries N6,N6-dimethyllysine; by EHMT2; alternate. A Glycyl lysine isopeptide (Lys-Gly) (interchain with G-Cter in SUMO2) cross-link involves residue Lys-1177. An interaction with CTBP1 and CTBP2 2 region spans residues 1214–1218 (PLNLS). The C2H2-type 9 zinc finger occupies 1227 to 1249 (IRCEFCGEFFENRKGLSSHARSH). A Glycyl lysine isopeptide (Lys-Gly) (interchain with G-Cter in SUMO2) cross-link involves residue Lys-1240. Phosphoserine is present on Ser-1263. Lys-1282 participates in a covalent cross-link: Glycyl lysine isopeptide (Lys-Gly) (interchain with G-Cter in SUMO2). Residues 1283–1331 (KEPPAGDLAPALAEDGPPTVAPGPVQSPLPLSPLAGRPGKPGAGPAQVP) are disordered. Residues 1301-1313 (TVAPGPVQSPLPL) show a composition bias toward pro residues. Phosphoserine occurs at positions 1309 and 1314. Residues 1315-1328 (PLAGRPGKPGAGPA) show a composition bias toward low complexity. Glycyl lysine isopeptide (Lys-Gly) (interchain with G-Cter in SUMO2) cross-links involve residues Lys-1343, Lys-1356, Lys-1370, Lys-1372, and Lys-1382. The segment at 1397–1419 (ACCELCGLYFENRKALASHARAH) adopts a C2H2-type 10 zinc-finger fold. Residues Lys-1448, Lys-1464, and Lys-1477 each participate in a glycyl lysine isopeptide (Lys-Gly) (interchain with G-Cter in SUMO2) cross-link. Positions 1463 to 1554 (TKKFRSAGHG…ASAARGGEDT (92 aa)) are disordered. Ser-1480 is subject to Phosphoserine. Low complexity predominate over residues 1481–1493 (LGLAPGGLAVVGR). Ser-1517 is subject to Phosphoserine. A Glycyl lysine isopeptide (Lys-Gly) (interchain with G-Cter in SUMO1); alternate cross-link involves residue Lys-1523. Lys-1523 is covalently cross-linked (Glycyl lysine isopeptide (Lys-Gly) (interchain with G-Cter in SUMO2); alternate). Positions 1523–1541 (KAEEHQRQNINKFERRQAR) are enriched in basic and acidic residues. Glycyl lysine isopeptide (Lys-Gly) (interchain with G-Cter in SUMO2) cross-links involve residues Lys-1534 and Lys-1560. The C2H2-type 11 zinc finger occupies 1596-1622 (LKCRFCEVEFQGPLSIQEEWVRHLQRH). The interval 1629–1651 (SKADPPPEESQAPQAQTAAAEAP) is disordered. Lys-1630 participates in a covalent cross-link: Glycyl lysine isopeptide (Lys-Gly) (interchain with G-Cter in SUMO2). Positions 1637–1651 (ESQAPQAQTAAAEAP) are enriched in low complexity.

Belongs to the krueppel C2H2-type zinc-finger protein family. Interacts with EHMT1, EHMT2, CTBP1 and CTBP2. Part of a complex containing at least CDYL, REST, WIZ, SETB1, EHMT1 and EHMT2.

It is found in the nucleus. In terms of biological role, may link EHMT1 and EHMT2 histone methyltransferases to the CTBP corepressor machinery. May be involved in EHMT1-EHMT2 heterodimer formation and stabilization. The sequence is that of Protein Wiz (WIZ) from Homo sapiens (Human).